Here is a 297-residue protein sequence, read N- to C-terminus: Protease HtpX homolog (297 aa).

The next 2 helical transmembrane spans lie at 14-34 and 39-59; these read IFLILAFFFLLTAIGAAAGYL and YQFGIVLALILGSIYAFSMIF. Histidine 143 is a binding site for Zn(2+). Residue glutamate 144 is part of the active site. Histidine 147 is a Zn(2+) binding site. 2 helical membrane passes run 153–173 and 196–216; these read IRISTIAVALASAITLIASMG and IVFLIFSLLSLILAPLIASMV. Zn(2+) is bound at residue glutamate 225.

This sequence belongs to the peptidase M48B family. It depends on Zn(2+) as a cofactor.

It is found in the cell membrane. In Streptococcus uberis (strain ATCC BAA-854 / 0140J), this protein is Protease HtpX homolog.